A 255-amino-acid chain; its full sequence is 1-(5-phosphoribosyl)-5-[(5-phosphoribosylamino)methylideneamino] imidazole-4-carboxamide isomerase (255 aa).

The active-site Proton acceptor is Asp-8. Asp-129 (proton donor) is an active-site residue.

Belongs to the HisA/HisF family.

It localises to the cytoplasm. It catalyses the reaction 1-(5-phospho-beta-D-ribosyl)-5-[(5-phospho-beta-D-ribosylamino)methylideneamino]imidazole-4-carboxamide = 5-[(5-phospho-1-deoxy-D-ribulos-1-ylimino)methylamino]-1-(5-phospho-beta-D-ribosyl)imidazole-4-carboxamide. It functions in the pathway amino-acid biosynthesis; L-histidine biosynthesis; L-histidine from 5-phospho-alpha-D-ribose 1-diphosphate: step 4/9. The protein is 1-(5-phosphoribosyl)-5-[(5-phosphoribosylamino)methylideneamino] imidazole-4-carboxamide isomerase of Parasynechococcus marenigrum (strain WH8102).